A 424-amino-acid chain; its full sequence is MAYFIDRRLNGKNKSTVNRQRFLRRYKSQIKQSISEAINKRSVTDIESGESVSIPNADINEPMFHQGRGGHRHRVHPGNDHFVQNDKIERPQGGGGSGSGQGDASKDGEGDDEFVFQISKDEYLDLLFEDLALPNLKKTQHRQMTEYKMHRAGYTANGVPANISVVRSLQNSLARRMAMTAGKRRTLHELEESLEQLAYTEPAQLLEEERLREDIAELRKKIARVPFIDTFDLRYKNYERRAEPSSQAVMFCLMDVSGSMDQATKDMAKRFYILLYLFLSRNYKNVDVVYIRHHTQAKEVDEQEFFYSQETGGTIVSSALKLMEEVVRERYDPSQWNIYAAQASDGDNWADDSPLCHQILASKLLPMVRYYSYIEITRRSHQTLWREYETLRDTFDNFAMQHIRDQDDIYPVFRELFRKQTVGH.

Residues 53 to 111 are disordered; it reads SIPNADINEPMFHQGRGGHRHRVHPGNDHFVQNDKIERPQGGGGSGSGQGDASKDGEGD. The segment covering 77–90 has biased composition (basic and acidic residues); that stretch reads PGNDHFVQNDKIER. Positions 92–101 are enriched in gly residues; that stretch reads QGGGGSGSGQ.

This sequence belongs to the UPF0229 family.

The polypeptide is UPF0229 protein ECA2349 (Pectobacterium atrosepticum (strain SCRI 1043 / ATCC BAA-672) (Erwinia carotovora subsp. atroseptica)).